Here is a 1129-residue protein sequence, read N- to C-terminus: Stress response protein nst1 (1129 aa).

Disordered stretches follow at residues 1–136, 229–307, 361–413, 453–879, and 903–937; these read MAPS…HLGT, NQGS…ETRA, NIAA…EQRM, MEEQ…TQRD, and NLSQSLPGATAPGSLPGPTRASFGAPSLFPDPLAS. The segment covering 14-54 has biased composition (polar residues); sequence ATTSDQMSTASSRPTNGTAHTSAETAYPSSMTDSKPTQSGP. Residues 72-85 are compositionally biased toward basic and acidic residues; it reads SEQHMDHSNPDGHP. The segment covering 89–101 has biased composition (basic residues); it reads SGRKKKKKAKKGR. Polar residues-rich tracts occupy residues 103-122 and 254-263; these read GSQTLGDESSTPLSTPSVSM and GQHTRTQGQF. Composition is skewed to acidic residues over residues 274-304 and 379-408; these read TEDEEDLEEDYDDEEEDDDEPYSDDEFEDEE and DEEDYDDEEDEEYDSQEEDDYDEDEMDTMT. Positions 441–608 form a coiled coil; it reads AEQRQQKLIE…EDQKKANQET (168 aa). Basic and acidic residues-rich tracts occupy residues 453-473 and 482-613; these read MEEQTRTEQKNAKKAREAEKR and QAKE…ETKR. A compositionally biased stretch (low complexity) spans 626–673; it reads LQPQGSSSHLQSPHLQSASPAVPKAPTPAKARQPSQQGSHGSSPRSQQ. Positions 674–685 are enriched in polar residues; it reads ASTEPFHTSISP. A compositionally biased stretch (low complexity) spans 687–701; the sequence is SMAPSQSSGASSVAS. The segment covering 718 to 728 has biased composition (polar residues); the sequence is TPLSPLGSVNR. Over residues 741–754 the composition is skewed to pro residues; that stretch reads SNPPGLPGMVPRPP. Over residues 865–875 the composition is skewed to polar residues; sequence TQQEQSDANRA.

This sequence belongs to the NST1 family.

The protein resides in the cytoplasm. Functionally, may act as a negative regulator of salt tolerance. This Aspergillus terreus (strain NIH 2624 / FGSC A1156) protein is Stress response protein nst1 (nst1).